Here is a 554-residue protein sequence, read N- to C-terminus: MADHGEHGVPEQQNAPPKKGLRFWLIFLAIGIATFVAALDTSIISTALPTITADLGSEELYIWIINTYLLSSTVSSAIVGQLSNIFGRRSMTTLALLIFAVGSAISGAARDTGMLLAGRTIQGLGGGSITTLSEVLVCDMVSLRERGVYAGILGAAWTLAAVVGPIMGGGFTQNVSWRWIFYINLPIAGSSLFLIVTLLRVRNPRSDTSILRRLRTIDWGGITLLTLGVTAILLSLTWAGTTHPWSSWRTIVPLILGFLGLLGFIAYEALPPEPTMPLRLFRNRTAATLFVMAFIYSLLLFWVCYFLPIYFQAVLNATPTRSAVMLFPVATTTAPAGIVAGILMTKTGRYRSFQYIGFALMTIACGLFTLLDQSTTTGEWTGYQILFGVGTGIVFTTGLPPILASLPESDVATGTATWIFMRNFGAIWGTAIPAAVFNTKANALASQTIDDPTVRGLLVNGGAYERATKAFVSSFKSRPAVMRAIRRLYVVSLREVWQVSIAFCGVGFLLCFLVKAYRLREELNTEYGMQLWRPVFKRLVCTWYLAGSANLMCT.

A run of 5 helical transmembrane segments spans residues 24-44 (WLIF…TSII), 60-80 (LYIW…AIVG), 96-116 (LLIF…GMLL), 123-143 (GLGG…MVSL), and 151-171 (GILG…GGGF). An N-linked (GlcNAc...) asparagine glycan is attached at N174. Transmembrane regions (helical) follow at residues 179–199 (WIFY…VTLL), 219–239 (WGGI…LTWA), and 251–271 (IVPL…EALP). N-linked (GlcNAc...) asparagine glycosylation is present at N283. Transmembrane regions (helical) follow at residues 289-309 (LFVM…FLPI), 324-344 (VMLF…GILM), 352-372 (SFQY…TLLD), 385-405 (ILFG…ILAS), 417-437 (TWIF…AAVF), and 496-516 (VWQV…LVKA).

Belongs to the major facilitator superfamily.

The protein resides in the membrane. Functionally, MFS-type transporter that may have a role in the biosynthesis of acurin A, a highly reduced polyketide coupled to a serine via a peptide bond; either in extra- or intracellular transport. In Aspergillus aculeatus (strain ATCC 16872 / CBS 172.66 / WB 5094), this protein is Acurin A biosynthesis cluster MFS-type transporter.